A 301-amino-acid polypeptide reads, in one-letter code: Protein FAM221A (301 aa).

The tract at residues 235 to 271 (MHAPSTSSPQPLAGGNEVGPSTQLSSLRKPEEDDMAY) is disordered.

Belongs to the FAM221 family.

The protein is Protein FAM221A (Fam221a) of Mus musculus (Mouse).